Here is a 364-residue protein sequence, read N- to C-terminus: UDP-3-O-acylglucosamine N-acyltransferase (364 aa).

His267 functions as the Proton acceptor in the catalytic mechanism.

This sequence belongs to the transferase hexapeptide repeat family. LpxD subfamily. In terms of assembly, homotrimer.

It catalyses the reaction a UDP-3-O-[(3R)-3-hydroxyacyl]-alpha-D-glucosamine + a (3R)-hydroxyacyl-[ACP] = a UDP-2-N,3-O-bis[(3R)-3-hydroxyacyl]-alpha-D-glucosamine + holo-[ACP] + H(+). The protein operates within bacterial outer membrane biogenesis; LPS lipid A biosynthesis. Its function is as follows. Catalyzes the N-acylation of UDP-3-O-acylglucosamine using 3-hydroxyacyl-ACP as the acyl donor. Is involved in the biosynthesis of lipid A, a phosphorylated glycolipid that anchors the lipopolysaccharide to the outer membrane of the cell. The protein is UDP-3-O-acylglucosamine N-acyltransferase of Bordetella petrii (strain ATCC BAA-461 / DSM 12804 / CCUG 43448).